The sequence spans 482 residues: Bifunctional protein GlmU (482 aa).

Residues methionine 1 to arginine 238 are pyrophosphorylase. UDP-N-acetyl-alpha-D-glucosamine-binding positions include leucine 12–glycine 15, lysine 26, glutamine 79, and glycine 84–threonine 85. Position 110 (aspartate 110) interacts with Mg(2+). The UDP-N-acetyl-alpha-D-glucosamine site is built by glycine 147, glutamate 163, asparagine 178, and asparagine 236. Asparagine 236 serves as a coordination point for Mg(2+). Residues leucine 239–alanine 259 are linker. Residues glycine 260–serine 482 are N-acetyltransferase. UDP-N-acetyl-alpha-D-glucosamine-binding residues include arginine 341 and lysine 359. The active-site Proton acceptor is histidine 371. 2 residues coordinate UDP-N-acetyl-alpha-D-glucosamine: tyrosine 374 and asparagine 385. Acetyl-CoA-binding positions include alanine 388, asparagine 394 to tyrosine 395, serine 413, alanine 431, and arginine 448. The disordered stretch occupies residues valine 458–serine 482. Over residues serine 465–glutamine 476 the composition is skewed to low complexity.

It in the N-terminal section; belongs to the N-acetylglucosamine-1-phosphate uridyltransferase family. This sequence in the C-terminal section; belongs to the transferase hexapeptide repeat family. Homotrimer. Mg(2+) serves as cofactor.

The protein localises to the cytoplasm. It catalyses the reaction alpha-D-glucosamine 1-phosphate + acetyl-CoA = N-acetyl-alpha-D-glucosamine 1-phosphate + CoA + H(+). The catalysed reaction is N-acetyl-alpha-D-glucosamine 1-phosphate + UTP + H(+) = UDP-N-acetyl-alpha-D-glucosamine + diphosphate. It participates in nucleotide-sugar biosynthesis; UDP-N-acetyl-alpha-D-glucosamine biosynthesis; N-acetyl-alpha-D-glucosamine 1-phosphate from alpha-D-glucosamine 6-phosphate (route II): step 2/2. It functions in the pathway nucleotide-sugar biosynthesis; UDP-N-acetyl-alpha-D-glucosamine biosynthesis; UDP-N-acetyl-alpha-D-glucosamine from N-acetyl-alpha-D-glucosamine 1-phosphate: step 1/1. Its pathway is bacterial outer membrane biogenesis; LPS lipid A biosynthesis. Functionally, catalyzes the last two sequential reactions in the de novo biosynthetic pathway for UDP-N-acetylglucosamine (UDP-GlcNAc). The C-terminal domain catalyzes the transfer of acetyl group from acetyl coenzyme A to glucosamine-1-phosphate (GlcN-1-P) to produce N-acetylglucosamine-1-phosphate (GlcNAc-1-P), which is converted into UDP-GlcNAc by the transfer of uridine 5-monophosphate (from uridine 5-triphosphate), a reaction catalyzed by the N-terminal domain. This Streptomyces griseus subsp. griseus (strain JCM 4626 / CBS 651.72 / NBRC 13350 / KCC S-0626 / ISP 5235) protein is Bifunctional protein GlmU.